The following is a 299-amino-acid chain: Syntenin-1 (299 aa).

S2 carries the post-translational modification N-acetylserine. The interaction with PDCD6IP stretch occupies residues 2–103 (SLYPSLEDLK…VAPVTGNDAG (102 aa)). 3 short sequence motifs (LYPX(n)L motif) span residues 3-7 (LYPSL), 46-50 (LYPKL), and 50-54 (LYPEL). A Phosphoserine modification is found at S6. Y47 bears the Phosphotyrosine mark. PDZ domains follow at residues 115–194 (EVIL…IRDR) and 199–273 (TVTM…IMPT). 251-252 (KD) serves as a coordination point for a 1,2-diacyl-sn-glycero-3-phospho-(1D-myo-inositol-4,5-bisphosphate).

As to quaternary structure, monomer and homodimer. Interacts with SDC1, SDC2, SDC3, SDC4, NRXN2, EPHA7, EPHB1, NF2 isoform 1, TGFA, IL5RA, NFASC, SDCBP2 and PTPRJ. Interacts with PDCD6IP. Forms a complex with PDCD6IP and SDC2. Interacts (via C-terminus) with TGFBR1. Binds to FZD7; this interaction is increased by inositol trisphosphate (IP3). Interacts with SMO. Phosphorylated on tyrosine residues.

The protein localises to the cell junction. Its subcellular location is the focal adhesion. It localises to the adherens junction. It is found in the cell membrane. The protein resides in the endoplasmic reticulum membrane. The protein localises to the nucleus. Its subcellular location is the melanosome. It localises to the cytoplasm. It is found in the cytosol. The protein resides in the cytoskeleton. The protein localises to the secreted. Its subcellular location is the extracellular exosome. It localises to the membrane raft. Functionally, multifunctional adapter protein involved in diverse array of functions including trafficking of transmembrane proteins, neuro and immunomodulation, exosome biogenesis, and tumorigenesis. Positively regulates TGFB1-mediated SMAD2/3 activation and TGFB1-induced epithelial-to-mesenchymal transition (EMT) and cell migration in various cell types. May increase TGFB1 signaling by enhancing cell-surface expression of TGFR1 by preventing the interaction between TGFR1 and CAV1 and subsequent CAV1-dependent internalization and degradation of TGFR1. In concert with SDC1/4 and PDCD6IP, regulates exosome biogenesis. Regulates migration, growth, proliferation, and cell cycle progression in a variety of cancer types. In adherens junctions may function to couple syndecans to cytoskeletal proteins or signaling components. Seems to couple transcription factor SOX4 to the IL-5 receptor (IL5RA). May also play a role in vesicular trafficking. Seems to be required for the targeting of TGFA to the cell surface in the early secretory pathway. The chain is Syntenin-1 (Sdcbp) from Mus musculus (Mouse).